The following is an 89-amino-acid chain: MALDTSTKAQIVSDFQRAQGDTGSPEVQVALLTARINGLTGHFKANAKDHHSRRGLLKMVSQRRKLLDYLKGRNVDSYRALIERLGLRK.

This sequence belongs to the universal ribosomal protein uS15 family. As to quaternary structure, part of the 30S ribosomal subunit. Forms a bridge to the 50S subunit in the 70S ribosome, contacting the 23S rRNA.

Functionally, one of the primary rRNA binding proteins, it binds directly to 16S rRNA where it helps nucleate assembly of the platform of the 30S subunit by binding and bridging several RNA helices of the 16S rRNA. In terms of biological role, forms an intersubunit bridge (bridge B4) with the 23S rRNA of the 50S subunit in the ribosome. The sequence is that of Small ribosomal subunit protein uS15 from Azoarcus sp. (strain BH72).